Consider the following 1192-residue polypeptide: Outer capsid protein VP2 (1192 aa).

Positions 1112-1192 (IDQFMLDDMP…QSVAKPGIVR (81 aa)) are disordered. The span at 1140-1150 (PSAAANTEAST) shows a compositional bias: low complexity. Over residues 1159–1183 (NVVSPTVPGQPSQTPVNPNQSTELQ) the composition is skewed to polar residues.

It is found in the virion. It carries out the reaction a 5'-end diphospho-ribonucleoside in mRNA + GTP + H(+) = a 5'-end (5'-triphosphoguanosine)-ribonucleoside in mRNA + diphosphate. The catalysed reaction is a 5'-end (5'-triphosphoguanosine)-ribonucleoside in mRNA + S-adenosyl-L-methionine = a 5'-end (N(7)-methyl 5'-triphosphoguanosine)-ribonucleoside in mRNA + S-adenosyl-L-homocysteine. Outer capsid protein involved in mRNA capping. Catalyzes the last 3 enzymatic activities for formation of the 5' cap structure on the viral plus-strand transcripts, namely the RNA guanylyltransferase, RNA-7N- and RNA-2'O-methyltransferase activities. This chain is Outer capsid protein VP2 (S2), found in Rice ragged stunt virus (isolate Thailand) (RRSV).